The sequence spans 258 residues: Spindlin-3 (258 aa).

Positions 1 to 23 (MKTPFGKAAAGQRSRTGAGHGSV) are disordered. Tudor-like domain regions lie at residues 50–99 (VGCR…LELH), 129–178 (VGKA…YQLL), and 210–255 (VGKQ…YDLV). 2 histone H3K4me3 and H3R8me2a binding regions span residues Glu-138 and 246–248 (DFH).

It belongs to the SPIN/STSY family. Interacts with C11orf84/SPINDOC.

In terms of biological role, exhibits H3K4me3-binding activity. The protein is Spindlin-3 (SPIN3) of Pongo abelii (Sumatran orangutan).